The chain runs to 236 residues: uncharacterized protein (236 aa).

Belongs to the RHS family.

This is an uncharacterized protein from Escherichia coli (strain K12).